The following is a 398-amino-acid chain: uncharacterized protein (398 aa).

The next 10 helical transmembrane spans lie at 43–65 (PILP…VGGL), 89–108 (IFVV…LGLS), 156–173 (TAGA…ILYL), 180–198 (IILI…LYFV), 224–246 (LFIL…ILRA), 259–281 (IIIP…IPFG), 291–311 (SVLT…AYFI), 316–338 (LILL…KAYV), 351–373 (LGLF…GYLW), and 380–397 (TFLY…LLLF).

This sequence belongs to the major facilitator superfamily.

The protein resides in the cell membrane. This is an uncharacterized protein from Methanocaldococcus jannaschii (strain ATCC 43067 / DSM 2661 / JAL-1 / JCM 10045 / NBRC 100440) (Methanococcus jannaschii).